A 118-amino-acid chain; its full sequence is Protein MT2260 (118 aa).

It belongs to the HesB/IscA family.

The protein is Protein MT2260 of Mycobacterium tuberculosis (strain CDC 1551 / Oshkosh).